Consider the following 292-residue polypeptide: uncharacterized protein (292 aa).

The segment at 1–213 is disordered; sequence MTTAITPDKK…DQDDDDQKDL (213 aa). Composition is skewed to basic residues over residues 27–43 and 50–78; these read TKPRRSSKTSKKRKSKK and AKKRKTKRSKKSAKRTKRSAPKKAPKKAP. Residues 90–100 are compositionally biased toward polar residues; the sequence is QQAQASLQKPI. Residues 116–134 show a composition bias toward pro residues; sequence PRPPTPIPPTGVKPEPAPR. The span at 143 to 158 shows a compositional bias: low complexity; that stretch reads SVSSTTPRTSATTGTT.

This is an uncharacterized protein from Caenorhabditis elegans.